A 455-amino-acid polypeptide reads, in one-letter code: Gamma-glutamyl phosphate reductase (455 aa).

The protein belongs to the gamma-glutamyl phosphate reductase family.

It is found in the cytoplasm. It carries out the reaction L-glutamate 5-semialdehyde + phosphate + NADP(+) = L-glutamyl 5-phosphate + NADPH + H(+). The protein operates within amino-acid biosynthesis; L-proline biosynthesis; L-glutamate 5-semialdehyde from L-glutamate: step 2/2. Functionally, catalyzes the NADPH-dependent reduction of L-glutamate 5-phosphate into L-glutamate 5-semialdehyde and phosphate. The product spontaneously undergoes cyclization to form 1-pyrroline-5-carboxylate. This is Gamma-glutamyl phosphate reductase from Synechococcus sp. (strain JA-3-3Ab) (Cyanobacteria bacterium Yellowstone A-Prime).